The sequence spans 1274 residues: Myosin-binding protein C, cardiac-type (1274 aa).

Met-1 is modified (N-acetylmethionine). Phosphoserine is present on Ser-47. Residues 107–141 (APAPAEATGAPGEAPAPAAELGESAPSPKGSSSAA) are compositionally biased toward low complexity. Residues 107 to 153 (APAPAEATGAPGEAPAPAAELGESAPSPKGSSSAALNGPTPGAPDDP) are disordered. Positions 153–256 (PIGLFVMRPQ…FDCSNFNLTV (104 aa)) constitute an Ig-like C2-type 1 domain. Zn(2+) contacts are provided by Gln-208, His-210, Glu-223, and His-225. Residues Ser-275, Ser-284, and Ser-304 each carry the phosphoserine; by PKA and PKC modification. Phosphoserine is present on residues Ser-311 and Ser-427. Ig-like C2-type domains follow at residues 362–452 (STAF…VKEP), 453–543 (PVLI…VQEK), 544–633 (KLEV…HFME), and 645–771 (PKIH…VIDV). A disulfide bridge connects residues Cys-436 and Cys-443. Ser-550 carries the post-translational modification Phosphoserine. Position 607 is a phosphothreonine (Thr-607). 2 Fibronectin type-III domains span residues 774 to 870 (APAA…IGPP) and 872 to 967 (EPTH…VQEI). Residues 971 to 1065 (PRLQLPRHLR…ATLVLQVVDK (95 aa)) enclose the Ig-like C2-type 6 domain. One can recognise a Fibronectin type-III 3 domain in the interval 1068 to 1163 (PPQDLRVTDA…TKEPVFIPRP (96 aa)). In terms of domain architecture, Ig-like C2-type 7 spans 1181-1274 (PSFTQPLVNR…ECRLEVRVPQ (94 aa)). Arg-1241 carries the post-translational modification Omega-N-methylarginine.

This sequence belongs to the immunoglobulin superfamily. MyBP family. Post-translationally, substrate for phosphorylation by PKA and PKC. Reversible phosphorylation appears to modulate contraction. In terms of processing, polyubiquitinated.

Thick filament-associated protein located in the crossbridge region of vertebrate striated muscle a bands. In vitro it binds MHC, F-actin and native thin filaments, and modifies the activity of actin-activated myosin ATPase. It may modulate muscle contraction or may play a more structural role. The polypeptide is Myosin-binding protein C, cardiac-type (MYBPC3) (Homo sapiens (Human)).